We begin with the raw amino-acid sequence, 506 residues long: ATP synthase subunit alpha (506 aa).

ATP is bound at residue 171-178 (GDRQTGKT).

It belongs to the ATPase alpha/beta chains family. F-type ATPases have 2 components, CF(1) - the catalytic core - and CF(0) - the membrane proton channel. CF(1) has five subunits: alpha(3), beta(3), gamma(1), delta(1), epsilon(1). CF(0) has four main subunits: a(1), b(1), b'(1) and c(9-12).

The protein localises to the cellular thylakoid membrane. It catalyses the reaction ATP + H2O + 4 H(+)(in) = ADP + phosphate + 5 H(+)(out). Functionally, produces ATP from ADP in the presence of a proton gradient across the membrane. The alpha chain is a regulatory subunit. In Trichormus variabilis (strain ATCC 29413 / PCC 7937) (Anabaena variabilis), this protein is ATP synthase subunit alpha.